The sequence spans 310 residues: Olfactory receptor 5P56 (310 aa).

The Extracellular portion of the chain corresponds to 1–25; sequence MEAQNHTTVKEFILLGLTENSTLRV. N-linked (GlcNAc...) asparagine glycans are attached at residues N5 and N20. A helical transmembrane segment spans residues 26–46; sequence ILFMIFLGIYTVTLVGNFSII. The Cytoplasmic portion of the chain corresponds to 47–54; sequence SLIRSCPQ. The chain crosses the membrane as a helical span at residues 55 to 75; it reads LHTPMYLFLSHLALVDIGFST. Residues 76 to 99 lie on the Extracellular side of the membrane; the sequence is SITPIMLTGFLGHTVTLSVAACVA. C97 and C189 form a disulfide bridge. Residues 100 to 120 form a helical membrane-spanning segment; sequence QFCIAVTFGTVECFLLAVMAY. The Cytoplasmic portion of the chain corresponds to 121 to 133; it reads DRYVAICSPLLYS. A helical transmembrane segment spans residues 134-154; that stretch reads THMSPRICFLLVGASYVGGCV. At 155 to 196 the chain is on the extracellular side; it reads NSGTFTSCLLILSFCGPNQIDHFFCDFPAVLKLSCSDVSIIG. A helical transmembrane segment spans residues 197 to 217; sequence IIPSISAGSIIVITVFVIAVS. Residues 218 to 237 are Cytoplasmic-facing; sequence YTYILITILNMRSTEGRHKA. A helical membrane pass occupies residues 238 to 258; the sequence is FSTCTSHLTAVTLYYGTITFI. At 259-271 the chain is on the extracellular side; that stretch reads YVMPKSNYSTAQN. N265 carries N-linked (GlcNAc...) asparagine glycosylation. The chain crosses the membrane as a helical span at residues 272–292; sequence KILSVFYTVVIPMLNPLIYSL. At 293–310 the chain is on the cytoplasmic side; the sequence is RNRDVKEALRKAIIRIFP.

This sequence belongs to the G-protein coupled receptor 1 family.

Its subcellular location is the cell membrane. Potential odorant receptor. In Mus musculus (Mouse), this protein is Olfactory receptor 5P56.